We begin with the raw amino-acid sequence, 354 residues long: MGCTLSAEDKAAVERSKMIDRNLREDGEKAAKEVKLLLLGAGESGKSTIVKQMKIIHEDGYSEDECKQYKVVVYSNTIQSIIAIIRAMGRLKIDFGEAARADDARQLFVLAGSAEEGVMTPELAGVIKRLWRDGGVQACFSRSREYQLNDSASYYLNDLDRISQSNYIPTQQDVLRTRVKTTGIVETHFTFKDLYFKMFDVGGQRSERKKWIHCFEGVTAIIFCVALSDYDLVLAEDEEMNRMHESMKLFDSICNNKWFTETSIILFLNKKDLFEEKIKRSPLTICYPEYTGSNTYEEAAAYIQCQFEDLNRRKDTKEIYTHFTCATDTKNVQFVFDAVTDVIIKNNLKECGLY.

Gly-2 carries N-myristoyl glycine lipidation. Cys-3 carries the S-palmitoyl cysteine lipid modification. The 323-residue stretch at 32-354 folds into the G-alpha domain; the sequence is KEVKLLLLGA…KNNLKECGLY (323 aa). Residues 35-48 form a G1 motif region; the sequence is KLLLLGAGESGKST. GTP is bound by residues Gly-42, Glu-43, Ser-44, Gly-45, Lys-46, Ser-47, Thr-48, Asp-150, Ser-151, Leu-175, Arg-176, Thr-177, Arg-178, Val-179, Lys-180, Thr-181, Val-201, and Gly-203. Residues Glu-43, Ser-44, Gly-45, Lys-46, Ser-47, and Thr-48 each contribute to the GDP site. Ser-47 lines the Mg(2+) pocket. GDP contacts are provided by Ser-151, Leu-175, Arg-176, Thr-177, and Arg-178. The interval 173–181 is G2 motif; it reads DVLRTRVKT. ADP-ribosylarginine; by cholera toxin is present on Arg-178. Thr-181 lines the Mg(2+) pocket. The segment at 196 to 205 is G3 motif; the sequence is FKMFDVGGQR. Gln-204 bears the Deamidated glutamine; by Photorhabdus PAU_02230 mark. The tract at residues 265 to 272 is G4 motif; sequence ILFLNKKD. Asn-269, Lys-270, Asp-272, Leu-273, Cys-325, Ala-326, and Thr-327 together coordinate GTP. 3 residues coordinate GDP: Asn-269, Lys-270, and Asp-272. The G5 motif stretch occupies residues 324-329; that stretch reads TCATDT. Residues Cys-325 and Ala-326 each contribute to the GDP site. Cys-351 is subject to ADP-ribosylcysteine; by pertussis toxin.

Belongs to the G-alpha family. G(i/o/t/z) subfamily. In terms of assembly, heterotrimeric G proteins are composed of 3 units; alpha, beta and gamma. The alpha subunit contains the guanine nucleotide binding site. GTP binding causes dissociation of the heterotrimer, liberating the individual subunits so that they can interact with downstream effector proteins. Forms a complex with CCDC88A/GIV and EGFR which leads to enhanced EGFR signaling and triggering of cell migration; ligand stimulation is required for recruitment of GNAI3 to the complex. Interacts (inactive GDP-bound form) with CCDC88A/GIV (via GBA motif); the interaction leads to activation of GNAI3. Interacts (inactive GDP-bound form) with CCDC88C/DAPLE (via GBA motif); the interaction leads to activation of GNAI3. Interacts (inactive GDP-bound form) with NUCB1 (via GBA motif) and NUCB2 (via GBA motif); the interaction leads to activation of GNAI3. Interacts (inactive GDP-bound form) with PLCD4 (via GBA motif); the interaction leads to activation of GNAI3. Interacts with INSR; the interaction is probably mediated by CCDC88A/GIV. Interacts with GPSM1. Interacts (GDP-bound form) with GPSM2 (via GoLoco domains). Does not interact with RGS2. Interacts with RGS8 and RGS10; this strongly enhances the intrinsic GTPase activity. Interacts with RGS16; this strongly enhances the intrinsic GTPase activity. Interacts with RGS12. Interacts (via active GTP- or inactive GDP-bound form) with RGS14. Interacts (via active GTP-bound form) with TRPC5 (via ANK repeats) in a homotetrameric ion channel; the interaction is direct and activates the channel activity. (Microbial infection) Deamidated at Gln-204 by Photorhabdus asymbiotica toxin PAU_02230, blocking GTP hydrolysis of heterotrimeric GNAQ or GNA11 and G-alphai (GNAI1, GNAI2 or GNAI3) proteins, thereby activating RhoA.

The protein resides in the cytoplasm. It localises to the cell membrane. Its subcellular location is the cytoskeleton. It is found in the microtubule organizing center. The protein localises to the centrosome. Its function is as follows. Heterotrimeric guanine nucleotide-binding proteins (G proteins) function as transducers downstream of G protein-coupled receptors (GPCRs) in numerous signaling cascades. The alpha chain contains the guanine nucleotide binding site and alternates between an active, GTP-bound state and an inactive, GDP-bound state. Signaling by an activated GPCR promotes GDP release and GTP binding. The alpha subunit has a low GTPase activity that converts bound GTP to GDP, thereby terminating the signal. Both GDP release and GTP hydrolysis are modulated by numerous regulatory proteins. Signaling is mediated via effector proteins, such as adenylate cyclase. Inhibits adenylate cyclase activity, leading to decreased intracellular cAMP levels. Stimulates the activity of receptor-regulated K(+) channels. The active GTP-bound form prevents the association of RGS14 with centrosomes and is required for the translocation of RGS14 from the cytoplasm to the plasma membrane. May play a role in cell division. The active GTP-bound form activates the calcium permeant TRPC5 ion channels. The protein is Guanine nucleotide-binding protein G(i) subunit alpha-3 (GNAI3) of Homo sapiens (Human).